Reading from the N-terminus, the 763-residue chain is Pentatricopeptide repeat-containing protein At4g32430, mitochondrial (763 aa).

A mitochondrion-targeting transit peptide spans 1–38 (MTLLNYLHCNRSKSFLFQRFYSPYRIAHKLFDGSSQRN). PPR repeat units follow at residues 77–109 (DEVTLCLALKACRGDLKRGCQIHGFSTTSGFTS), 110–140 (FVCVSNAVMGMYRKAGRFDNALCIFENLVDP), 141–172 (DVVSWNTILSGFDDNQIALNFVVRMKSAGVVF), 173–207 (DAFTYSTALSFCVGSEGFLLGLQLQSTVVKTGLES), 208–238 (DLVVGNSFITMYSRSGSFRGARRVFDEMSFK), 239–274 (DMISWNSLLSGLSQEGTFGFEAVVIFRDMMREGVEL), 275–309 (DHVSFTSVITTCCHETDLKLARQIHGLCIKRGYES), 310–344 (LLEVGNILMSRYSKCGVLEAVKSVFHQMSERNVVS), 350–370 (SSNKDDAVSIFLNMRFDGVYP), 371–405 (NEVTFVGLINAVKCNEQIKEGLKIHGLCIKTGFVS), 406–436 (EPSVGNSFITLYAKFEALEDAKKAFEDITFR), 437–471 (EIISWNAMISGFAQNGFSHEALKMFLSAAAETMPN), 472–507 (EYTFGSVLNAIAFAEDISVKQGQRCHAHLLKLGLNS), 508–538 (CPVVSSALLDMYAKRGNIDESEKVFNEMSQK), 539–573 (NQFVWTSIISAYSSHGDFETVMNLFHKMIKENVAP), 574–604 (DLVTFLSVLTACNRKGMVDKGYEIFNMMIEV), and 610–640 (SHEHYSCMVDMLGRAGRLKEAEELMSEVPGG). A type E motif region spans residues 645-720 (MLQSMLGSCR…EAGFSWIDVG (76 aa)). Positions 724–756 (GSLTMQGFSSGDKSHPKSDEIYRMVEIIGLEMN) are type E(+) motif.

This sequence belongs to the PPR family. PCMP-E subfamily.

It localises to the mitochondrion. In Arabidopsis thaliana (Mouse-ear cress), this protein is Pentatricopeptide repeat-containing protein At4g32430, mitochondrial (PCMP-E40).